A 406-amino-acid chain; its full sequence is E3 ubiquitin-protein ligase RING1 (406 aa).

Threonine 24 carries the post-translational modification Phosphothreonine. The tract at residues 30 to 234 (MDGTEIAVSP…GGAGSEDSGD (205 aa)) is necessary for transcriptional repression. The residue at position 38 (serine 38) is a Phosphoserine. The segment at 48–88 (CPICLDMLKNTMTTKECLHRFCSDCIVTALRSGNKECPTCR) adopts an RING-type zinc-finger fold. Serine 140, serine 187, and serine 190 each carry phosphoserine. 2 disordered regions span residues 148-263 (QAMH…GEIE) and 309-354 (QQQE…PSLE). Over residues 175–187 (EPGEGEGDGEDVS) the composition is skewed to acidic residues. The Nuclear localization signal signature appears at 201 to 204 (KRPR). Residues 205–228 (GGGAGGSSVGTGGGGTGGVGGGAG) show a composition bias toward gly residues. Phosphothreonine occurs at positions 215 and 220. A phosphoserine mark is found at serine 229 and serine 232. Residues 230-406 (EDSGDRGGTL…LCYAPTKDPK (177 aa)) are necessary for interaction with CBX2. Residues 235-244 (RGGTLGGGTL) are compositionally biased toward gly residues. Positions 246–258 (PPSPPGAPSPPEP) are enriched in pro residues. Phosphoserine is present on residues serine 248 and serine 254. A compositionally biased stretch (gly residues) spans 315-343 (EPGGPGGGASDTGGPDGCGGEGGGAGGGD).

In terms of assembly, component of chromatin-associated Polycomb (PcG) complexes. Interacts with BMI1. Part of the E2F6.com-1 complex in G0 phase composed of E2F6, MGA, MAX, TFDP1, CBX3, BAT8, EUHMTASE1, RING1, RNF2/RING2 MBLR, L3MBTL2 and YAF2. Interacts with CBX2 and PCGF6. Component of a PRC1-like complex. Component of repressive BCOR complex containing Polycomb group subcomplex at least composed of RYBP, PCGF1, BCOR and RNF2/RING2. Interacts with PCGF2, RNF2; CBX6, CBX7 and CBX8. Interacts with PHC2. Interacts with MN1. Interacts with USP26.

Its subcellular location is the nucleus. The protein resides in the nucleus speckle. The catalysed reaction is S-ubiquitinyl-[E2 ubiquitin-conjugating enzyme]-L-cysteine + [acceptor protein]-L-lysine = [E2 ubiquitin-conjugating enzyme]-L-cysteine + N(6)-ubiquitinyl-[acceptor protein]-L-lysine.. The protein operates within protein modification; protein ubiquitination. Constitutes one of the E3 ubiquitin-protein ligases that mediate monoubiquitination of 'Lys-119' of histone H2A, thereby playing a central role in histone code and gene regulation. H2A 'Lys-119' ubiquitination gives a specific tag for epigenetic transcriptional repression and participates in X chromosome inactivation of female mammals. Essential component of a Polycomb group (PcG) multiprotein PRC1-like complex, a complex class required to maintain the transcriptionally repressive state of many genes, including Hox genes, throughout development. PcG PRC1 complex acts via chromatin remodeling and modification of histones, rendering chromatin heritably changed in its expressibility. Compared to RNF2/RING2, it does not have the main E3 ubiquitin ligase activity on histone H2A, and it may rather act as a modulator of RNF2/RING2 activity. This Homo sapiens (Human) protein is E3 ubiquitin-protein ligase RING1.